The chain runs to 204 residues: dCTP deaminase, dUMP-forming (204 aa).

Residues 117–122 (RSSLGR), H128, G132, D135, 143–145 (TLE), Q163, Y177, K184, and Q188 contribute to the dCTP site. E145 (proton donor/acceptor) is an active-site residue.

As to quaternary structure, homotrimer. Two trimers assemble into a hexamer by stacking on top of each other. Requires Mg(2+) as cofactor.

It catalyses the reaction dCTP + 2 H2O = dUMP + NH4(+) + diphosphate. It functions in the pathway pyrimidine metabolism; dUMP biosynthesis; dUMP from dCTP: step 1/1. With respect to regulation, inhibited by dTTP. In terms of biological role, bifunctional enzyme that catalyzes both the deamination of dCTP to dUTP and the hydrolysis of dUTP to dUMP without releasing the toxic dUTP intermediate. It also acts as a dUTP diphosphatase with a lower affinity for dUTP than for dCTP. This is dCTP deaminase, dUMP-forming from Methanocaldococcus jannaschii (strain ATCC 43067 / DSM 2661 / JAL-1 / JCM 10045 / NBRC 100440) (Methanococcus jannaschii).